The sequence spans 359 residues: MRSIRKRWTICTISLLLIFYKTKEMARTEEHQETQLIGDGELSLSRSLVNSSDKIIRKAGSSIFQHSVEGGKINSSLVLEIRKNILRFLDAERDVSVVKSSFKPGDVIHYVLDRRRTLNISQDLHSLLPEVSPMKNRRFKTCAVVGNSGILLDSECGKEIDSHNFVIRCNLAPVVEFAADVGTKSDFITMNPSVVQRAFGGFRNESDREKFVHRLSMLNDSVLWIPAFMVKGGEKHVEWVNALILKNKLKVRTAYPSLRLIHAVRGYWLTNKVPIKRPSTGLLMYTLATRFCDEIHLYGFWPFPKDLNGKAVKYHYYDDLKYRYFSNASPHRMPLEFKTLNVLHNRGALKLTTGKCIKQ.

The Cytoplasmic portion of the chain corresponds to 1-7 (MRSIRKR). The helical; Signal-anchor for type II membrane protein transmembrane segment at 8–20 (WTICTISLLLIFY) threads the bilayer. Over 21 to 359 (KTKEMARTEE…KLTTGKCIKQ (339 aa)) the chain is Lumenal. Asparagine 50, asparagine 74, and asparagine 119 each carry an N-linked (GlcNAc...) asparagine glycan. Intrachain disulfides connect cysteine 142/cysteine 292 and cysteine 156/cysteine 356. 2 residues coordinate CMP-N-acetyl-beta-neuraminate: asparagine 147 and asparagine 170. Residues asparagine 204 and asparagine 219 are each glycosylated (N-linked (GlcNAc...) asparagine). 4 residues coordinate CMP-N-acetyl-beta-neuraminate: serine 279, threonine 280, glycine 281, and tryptophan 301. Histidine 331 acts as the Proton donor/acceptor in catalysis.

Belongs to the glycosyltransferase 29 family. Post-translationally, autopolysialylated.

It is found in the golgi apparatus membrane. Its subcellular location is the secreted. The catalysed reaction is [N-acetyl-alpha-D-neuraminosyl-(2-&gt;8)](n) + CMP-N-acetyl-beta-neuraminate = [N-acetyl-alpha-D-neuraminosyl-(2-&gt;8)](n+1) + CMP + H(+). In terms of biological role, catalyzes the transfer of a sialic acid from a CMP-linked sialic acid donor onto a terminal alpha-2,3-, alpha-2,6-, or alpha-2,8-linked sialic acid of an N-linked glycan protein acceptor through alpha-2,8-linkages. Therefore, participates in polysialic acid synthesis on various sialylated N-acetyllactosaminyl oligosaccharides, including NCAM1 N-glycans, FETUB N-glycans and AHSG. It is noteworthy that alpha-2,3-linked sialic acid is apparently a better acceptor than alpha-2,6-linked sialic acid. In Bos taurus (Bovine), this protein is CMP-N-acetylneuraminate-poly-alpha-2,8-sialyltransferase (ST8SIA4).